A 581-amino-acid chain; its full sequence is NADH-quinone oxidoreductase subunit C/D (581 aa).

An NADH dehydrogenase I subunit C region spans residues Met1 to Phe172. The segment at Glu196–Arg581 is NADH dehydrogenase I subunit D.

It in the N-terminal section; belongs to the complex I 30 kDa subunit family. In the C-terminal section; belongs to the complex I 49 kDa subunit family. In terms of assembly, NDH-1 is composed of 13 different subunits. Subunits NuoB, CD, E, F, and G constitute the peripheral sector of the complex.

It localises to the cell inner membrane. It carries out the reaction a quinone + NADH + 5 H(+)(in) = a quinol + NAD(+) + 4 H(+)(out). In terms of biological role, NDH-1 shuttles electrons from NADH, via FMN and iron-sulfur (Fe-S) centers, to quinones in the respiratory chain. The immediate electron acceptor for the enzyme in this species is believed to be ubiquinone. Couples the redox reaction to proton translocation (for every two electrons transferred, four hydrogen ions are translocated across the cytoplasmic membrane), and thus conserves the redox energy in a proton gradient. The chain is NADH-quinone oxidoreductase subunit C/D from Rhodopseudomonas palustris (strain TIE-1).